The following is a 198-amino-acid chain: Protein GrpE (198 aa).

Over residues 1–18 (MSEQEQKVEIPEVEKQEE) the composition is skewed to basic and acidic residues. The interval 1-33 (MSEQEQKVEIPEVEKQEEVVVEETQQAEHSQEF) is disordered.

Belongs to the GrpE family. Homodimer.

The protein localises to the cytoplasm. Its function is as follows. Participates actively in the response to hyperosmotic and heat shock by preventing the aggregation of stress-denatured proteins, in association with DnaK and GrpE. It is the nucleotide exchange factor for DnaK and may function as a thermosensor. Unfolded proteins bind initially to DnaJ; upon interaction with the DnaJ-bound protein, DnaK hydrolyzes its bound ATP, resulting in the formation of a stable complex. GrpE releases ADP from DnaK; ATP binding to DnaK triggers the release of the substrate protein, thus completing the reaction cycle. Several rounds of ATP-dependent interactions between DnaJ, DnaK and GrpE are required for fully efficient folding. The protein is Protein GrpE of Haemophilus influenzae (strain ATCC 51907 / DSM 11121 / KW20 / Rd).